The primary structure comprises 62 residues: UPF0339 protein Atu0232 (62 aa).

This sequence belongs to the UPF0339 family.

The chain is UPF0339 protein Atu0232 from Agrobacterium fabrum (strain C58 / ATCC 33970) (Agrobacterium tumefaciens (strain C58)).